Reading from the N-terminus, the 400-residue chain is Inosine-5'-monophosphate dehydrogenase (400 aa).

Residues 96–116 (KNESTPDQNLDKESTDGKDTK) show a composition bias toward basic and acidic residues. Residues 96–125 (KNESTPDQNLDKESTDGKDTKSNNNIDAYS) form a disordered region. Residues D163 and 212 to 214 (GIG) each bind NAD(+). G214 and G216 together coordinate K(+). IMP is bound at residue S217. Position 219 (C219) interacts with K(+). C219 functions as the Thioimidate intermediate in the catalytic mechanism. Residues 252–254 (DGG), 275–276 (GS), and 299–303 (YRGMG) contribute to the IMP site. R315 acts as the Proton acceptor in catalysis. E329 lines the IMP pocket. Residues E383, S384, and H385 each coordinate K(+).

This sequence belongs to the IMPDH/GMPR family. As to quaternary structure, homotetramer. It depends on K(+) as a cofactor.

Its subcellular location is the cytoplasm. It catalyses the reaction IMP + NAD(+) + H2O = XMP + NADH + H(+). The protein operates within purine metabolism; XMP biosynthesis via de novo pathway; XMP from IMP: step 1/1. Its activity is regulated as follows. Mycophenolic acid (MPA) is a non-competitive inhibitor that prevents formation of the closed enzyme conformation by binding to the same site as the amobile flap. In contrast, mizoribine monophosphate (MZP) is a competitive inhibitor that induces the closed conformation. MPA is a potent inhibitor of mammalian IMPDHs but a poor inhibitor of the bacterial enzymes. MZP is a more potent inhibitor of bacterial IMPDH. Resistant to mycophenolic acid (MPA) inhibition. In terms of biological role, catalyzes the conversion of inosine 5'-phosphate (IMP) to xanthosine 5'-phosphate (XMP), the first committed and rate-limiting step in the de novo synthesis of guanine nucleotides, and therefore plays an important role in the regulation of cell growth. The chain is Inosine-5'-monophosphate dehydrogenase from Cryptosporidium parvum.